We begin with the raw amino-acid sequence, 194 residues long: Adenylate kinase (194 aa).

10-15 (GAGKGT) provides a ligand contact to ATP. Residues 30–59 (STGDMLRAAVAQQSEIGKRAKAVMDAGQLV) are NMP. Residues threonine 31, arginine 36, 57–59 (QLV), 85–88 (GYPR), and glutamine 92 contribute to the AMP site. Residues 126 to 142 (SRVAETIAKGGQVRSDD) form an LID region. Arginine 127 contacts ATP. Residues arginine 139 and arginine 150 each contribute to the AMP site. Alanine 178 lines the ATP pocket.

The protein belongs to the adenylate kinase family. In terms of assembly, monomer.

It is found in the cytoplasm. The catalysed reaction is AMP + ATP = 2 ADP. The protein operates within purine metabolism; AMP biosynthesis via salvage pathway; AMP from ADP: step 1/1. Functionally, catalyzes the reversible transfer of the terminal phosphate group between ATP and AMP. Plays an important role in cellular energy homeostasis and in adenine nucleotide metabolism. This chain is Adenylate kinase, found in Brucella abortus (strain S19).